The primary structure comprises 254 residues: UPF0246 protein FTH_1656 (254 aa).

This sequence belongs to the UPF0246 family.

The polypeptide is UPF0246 protein FTH_1656 (Francisella tularensis subsp. holarctica (strain OSU18)).